The sequence spans 143 residues: Transcriptional regulator MraZ (143 aa).

SpoVT-AbrB domains follow at residues 5 to 47 (EYNH…SSDE) and 76 to 119 (ASEC…SNVE).

The protein belongs to the MraZ family. Forms oligomers.

It localises to the cytoplasm. Its subcellular location is the nucleoid. The protein is Transcriptional regulator MraZ of Alkaliphilus oremlandii (strain OhILAs) (Clostridium oremlandii (strain OhILAs)).